The chain runs to 191 residues: Large ribosomal subunit protein eL6 (191 aa).

The protein belongs to the eukaryotic ribosomal protein eL6 family.

The polypeptide is Large ribosomal subunit protein eL6 (RPL6) (Tetrahymena thermophila (strain SB210)).